The sequence spans 530 residues: Protein SLOW WALKER 1 (530 aa).

WD repeat units lie at residues 50 to 89 (NLVS…SSRR), 91 to 130 (SFRD…ALRT), 133 to 173 (SHSA…VISD), 176 to 216 (GHKD…SNWI), 220 to 258 (NHGL…KMVC), 262 to 304 (SHNK…VTYS), and 320 to 363 (GSTR…DESR). The Nuclear localization signal motif lies at 392 to 399 (EKKGLKLT).

As to expression, expressed in cells undergoing active cell divisions, including functional megaspores and the female gametophytic cells. Accumulates in roots, stems, leaves, inflorescences and siliques.

The protein resides in the nucleus. It localises to the nucleolus. Essential protein required for nuclear division and organization during embryo sac development in female gametophyte, probably by promoting rRNA biogenesis essential for the progression of the mitotic division cycles during gametogenesis. Involved in nucleolar processing of pre-18S ribosomal RNA. The polypeptide is Protein SLOW WALKER 1 (Arabidopsis thaliana (Mouse-ear cress)).